The chain runs to 33 residues: DCCRKPFRKHCWDCTAGTPYYGYSTRNIFGCTC.

It localises to the secreted. Has antifungal activity against N.crassa and F.culmorum. This is Mytimycin from Mytilus edulis (Blue mussel).